The primary structure comprises 113 residues: U11-theraphotoxin-Hhn1a (113 aa).

Residues 1–21 (MNTVRVTFLPVFVLAVSLGQA) form the signal peptide. A propeptide spanning residues 22 to 74 (DKDENRMEMQEKTEQGKSYLDFAENLLLQKLEELEAKLLEEDSEESRNSRQKR) is cleaved from the precursor. Residues 61–83 (EEDSEESRNSRQKRCIGEGVPCD) are disordered. Disulfide bonds link C75-C90, C82-C95, and C89-C110.

It belongs to the neurotoxin 14 (magi-1) family. 01 (HNTX-16) subfamily. In terms of tissue distribution, expressed by the venom gland.

Its subcellular location is the secreted. The sequence is that of U11-theraphotoxin-Hhn1a from Cyriopagopus hainanus (Chinese bird spider).